The sequence spans 588 residues: Intracellular maltogenic amylase (588 aa).

Ca(2+) contacts are provided by N149, S155, G174, and D176. Substrate is bound by residues H249 and R325. Catalysis depends on D327, which acts as the Nucleophile. The active-site Proton donor is E356. Substrate is bound by residues 422–423 (HD), D467, and R471.

The protein belongs to the glycosyl hydrolase 13 family. BbmA subfamily. As to quaternary structure, monomer or homodimer; in equilibrium. Ca(2+) serves as cofactor.

It localises to the cytoplasm. In terms of biological role, hydrolyzes beta-cyclodextrin to maltose and glucose, soluble starch to maltose and glucose, and pullulan to panose with trace amounts of maltose and glucose. It is also able to hydrolyze acarbose. Can also exhibit a transglycosylation activity transferring glucose or maltose to another moiety of sugars by forming alpha-(1,6)- and alpha-(1,3)-glycosidic linkages upon the hydrolysis of substrate at concentrations of 5% or higher. The polypeptide is Intracellular maltogenic amylase (bbmA) (Bacillus subtilis (strain 168)).